The sequence spans 438 residues: Trigger factor (438 aa).

The region spanning 160 to 245 is the PPIase FKBP-type domain; the sequence is DDKVVIDFVG…VKKIQEAQLP (86 aa).

This sequence belongs to the FKBP-type PPIase family. Tig subfamily.

The protein localises to the cytoplasm. It carries out the reaction [protein]-peptidylproline (omega=180) = [protein]-peptidylproline (omega=0). Its function is as follows. Involved in protein export. Acts as a chaperone by maintaining the newly synthesized protein in an open conformation. Functions as a peptidyl-prolyl cis-trans isomerase. This Francisella philomiragia subsp. philomiragia (strain ATCC 25017 / CCUG 19701 / FSC 153 / O#319-036) protein is Trigger factor.